Consider the following 329-residue polypeptide: Malate dehydrogenase 2 (329 aa).

Position 12-18 (12-18 (GAAGQIA)) interacts with NAD(+). The substrate site is built by Arg-93 and Arg-99. NAD(+) contacts are provided by residues Asn-106, Gln-113, and 130–132 (VGN). 2 residues coordinate substrate: Asn-132 and Arg-163. His-188 acts as the Proton acceptor in catalysis.

Belongs to the LDH/MDH superfamily. MDH type 2 family.

The catalysed reaction is (S)-malate + NAD(+) = oxaloacetate + NADH + H(+). Functionally, catalyzes the reversible oxidation of malate to oxaloacetate. This Burkholderia thailandensis (strain ATCC 700388 / DSM 13276 / CCUG 48851 / CIP 106301 / E264) protein is Malate dehydrogenase 2.